Consider the following 419-residue polypeptide: Tyrosine--tRNA ligase (419 aa).

Residue tyrosine 42 participates in L-tyrosine binding. The short motif at 47–56 (CTAPSLHVGS) is the 'HIGH' region element. Positions 179 and 183 each coordinate L-tyrosine. The short motif at 239-243 (KMGKT) is the 'KMSKS' region element. Lysine 242 lines the ATP pocket. One can recognise an S4 RNA-binding domain in the interval 353-419 (LGVLAAFVKA…RKRHVLLKLV (67 aa)).

It belongs to the class-I aminoacyl-tRNA synthetase family. TyrS type 1 subfamily. Homodimer.

It is found in the cytoplasm. The enzyme catalyses tRNA(Tyr) + L-tyrosine + ATP = L-tyrosyl-tRNA(Tyr) + AMP + diphosphate + H(+). Functionally, catalyzes the attachment of tyrosine to tRNA(Tyr) in a two-step reaction: tyrosine is first activated by ATP to form Tyr-AMP and then transferred to the acceptor end of tRNA(Tyr). This chain is Tyrosine--tRNA ligase, found in Methylocella silvestris (strain DSM 15510 / CIP 108128 / LMG 27833 / NCIMB 13906 / BL2).